The chain runs to 230 residues: Cytochrome b6-f complex iron-sulfur subunit, chloroplastic (230 aa).

A chloroplast-targeting transit peptide spans 1–51 (MASFTLSSATPSQLCSSKNGMFAPSLALAKAGRVNVLISKERIRGMKLTCQ). Residues 73–93 (LLGALSLPTGYMLLPYASFFV) traverse the membrane as a helical segment. A Rieske domain is found at 116-212 (AAEWLKTHAP…CDVDDGKVVF (97 aa)). The [2Fe-2S] cluster site is built by C158, H160, C176, and H179. C163 and C178 are joined by a disulfide.

This sequence belongs to the Rieske iron-sulfur protein family. The 4 large subunits of the cytochrome b6-f complex are cytochrome b6, subunit IV (17 kDa polypeptide, petD), cytochrome f and the Rieske protein, while the 4 small subunits are petG, petL, petM and petN. The complex functions as a dimer. The cofactor is [2Fe-2S] cluster.

Its subcellular location is the plastid. It localises to the chloroplast thylakoid membrane. It carries out the reaction 2 oxidized [plastocyanin] + a plastoquinol + 2 H(+)(in) = 2 reduced [plastocyanin] + a plastoquinone + 4 H(+)(out). In terms of biological role, component of the cytochrome b6-f complex, which mediates electron transfer between photosystem II (PSII) and photosystem I (PSI), cyclic electron flow around PSI, and state transitions. In Spinacia oleracea (Spinach), this protein is Cytochrome b6-f complex iron-sulfur subunit, chloroplastic (petC).